Reading from the N-terminus, the 185-residue chain is NAD(P)H-dependent FAD/FMN reductase GTNG_3158 (185 aa).

As to quaternary structure, anthranilate 3-monooxygenase consists of a reductase component (GTNG_3158) and an oxygenase component HpaH.

The enzyme catalyses FADH2 + NAD(+) = FAD + NADH + 2 H(+). It carries out the reaction FADH2 + NADP(+) = FAD + NADPH + 2 H(+). Involved in the pathway of tryptophan degradation. Reduces FAD/FMN to FADH(2)/FMNH(2), which are subsequently used for the hydroxylation of anthranilate. It can reduce either FAD or flavin mononucleotide (FMN) but prefers FAD. The enzyme has a slight preference for NADPH as acceptor. In Geobacillus thermodenitrificans (strain NG80-2), this protein is NAD(P)H-dependent FAD/FMN reductase GTNG_3158.